Reading from the N-terminus, the 248-residue chain is Ribonuclease HII (248 aa).

Positions 29–219 constitute an RNase H type-2 domain; the sequence is DIVCGVDEAG…VREAHLRLGT (191 aa). A divalent metal cation is bound by residues aspartate 35, glutamate 36, and aspartate 128.

This sequence belongs to the RNase HII family. The cofactor is Mn(2+). It depends on Mg(2+) as a cofactor.

The protein localises to the cytoplasm. It carries out the reaction Endonucleolytic cleavage to 5'-phosphomonoester.. Functionally, endonuclease that specifically degrades the RNA of RNA-DNA hybrids. The polypeptide is Ribonuclease HII (Paraburkholderia xenovorans (strain LB400)).